Consider the following 296-residue polypeptide: MADISGNGYGNAREEVVMVNLKDEVEHQQEMEDIHNPRPLKKQDSLLSVSVPFLQKLIAEFLGTYFLVFTGCASVVVNMQNDNVVTLPGIAIVWGLTIMVLIYSLGHISGAHINPAVTIAFASCGRFPLKQVPAYVISQVIGSTLAAATLRLLFGLDHDVCSGKHDVFIGSSPVGSDLQAFTMEFIVTFYLMFIISGVATDNRAIGELAGLAIGSTVLLNVLIAAPVSSASMNPGRSLGPALVYGCYKGIWIYLVAPTLGAIAGAWVYNTVRYTDKPLREITKSGSFLKTVRIGST.

Residue Met1 is modified to N-acetylmethionine. Transmembrane regions (helical) follow at residues 57–77 (LIAEFLGTYFLVFTGCASVVV) and 84–104 (VVTLPGIAIVWGLTIMVLIYS). Residues 114–116 (NPA) carry the NPA 1 motif. Helical transmembrane passes span 136–156 (VISQVIGSTLAAATLRLLFGL), 180–200 (AFTMEFIVTFYLMFIISGVAT), and 205–225 (IGELAGLAIGSTVLLNVLIAA). The NPA 2 signature appears at 233-235 (NPG). The helical transmembrane segment at 249–269 (GIWIYLVAPTLGAIAGAWVYN) threads the bilayer. Ser286 carries the post-translational modification Phosphoserine.

It belongs to the MIP/aquaporin (TC 1.A.8) family. NIP (TC 1.A.8.12) subfamily. As to expression, expressed in roots.

It is found in the membrane. Water channel probably required to promote glycerol permeability and water transport across cell membranes. The chain is Aquaporin NIP1-1 (NIP1-1) from Arabidopsis thaliana (Mouse-ear cress).